Consider the following 949-residue polypeptide: Bifunctional uridylyltransferase/uridylyl-removing enzyme (949 aa).

The interval 1 to 37 (MKETSFWGETPSLSFADDTDKPLSDRTASPPCDPASS) is disordered. Residues 1–395 (MKETSFWGET…TTGEPPKVVP (395 aa)) are uridylyltransferase. The segment at 396-756 (GPEEFQTIAG…AYPIPERGVT (361 aa)) is uridylyl-removing. The region spanning 516-632 (VDEHIVEAVR…LDLADTIQSP (117 aa)) is the HD domain. 2 consecutive ACT domains span residues 757–834 (ELTV…LDIR) and 870–949 (VIEV…TPAS).

The protein belongs to the GlnD family. Mg(2+) serves as cofactor.

It carries out the reaction [protein-PII]-L-tyrosine + UTP = [protein-PII]-uridylyl-L-tyrosine + diphosphate. It catalyses the reaction [protein-PII]-uridylyl-L-tyrosine + H2O = [protein-PII]-L-tyrosine + UMP + H(+). With respect to regulation, uridylyltransferase (UTase) activity is inhibited by glutamine, while glutamine activates uridylyl-removing (UR) activity. In terms of biological role, modifies, by uridylylation and deuridylylation, the PII regulatory proteins (GlnB and homologs), in response to the nitrogen status of the cell that GlnD senses through the glutamine level. Under low glutamine levels, catalyzes the conversion of the PII proteins and UTP to PII-UMP and PPi, while under higher glutamine levels, GlnD hydrolyzes PII-UMP to PII and UMP (deuridylylation). Thus, controls uridylylation state and activity of the PII proteins, and plays an important role in the regulation of nitrogen assimilation and metabolism. The sequence is that of Bifunctional uridylyltransferase/uridylyl-removing enzyme from Gluconobacter oxydans (strain 621H) (Gluconobacter suboxydans).